The sequence spans 233 residues: Demethylmenaquinone methyltransferase (233 aa).

S-adenosyl-L-methionine is bound by residues threonine 58, aspartate 79, and 106–107; that span reads NA.

It belongs to the class I-like SAM-binding methyltransferase superfamily. MenG/UbiE family.

The enzyme catalyses a 2-demethylmenaquinol + S-adenosyl-L-methionine = a menaquinol + S-adenosyl-L-homocysteine + H(+). It participates in quinol/quinone metabolism; menaquinone biosynthesis; menaquinol from 1,4-dihydroxy-2-naphthoate: step 2/2. Functionally, methyltransferase required for the conversion of demethylmenaquinol (DMKH2) to menaquinol (MKH2). This is Demethylmenaquinone methyltransferase from Bacillus subtilis (strain 168).